A 467-amino-acid polypeptide reads, in one-letter code: Asparagine--tRNA ligase (467 aa).

This sequence belongs to the class-II aminoacyl-tRNA synthetase family. In terms of assembly, homodimer.

The protein localises to the cytoplasm. It carries out the reaction tRNA(Asn) + L-asparagine + ATP = L-asparaginyl-tRNA(Asn) + AMP + diphosphate + H(+). The protein is Asparagine--tRNA ligase of Legionella pneumophila (strain Corby).